Here is a 135-residue protein sequence, read N- to C-terminus: uncharacterized protein (135 aa).

A run of 3 helical transmembrane segments spans residues 13-35 (AKVIRYFTLAGLILLVVSSAMYL), 82-101 (VAVFSLFFLALAPVFALLSI), and 108-130 (IYRILTILVVAELLFGAVRPLIL).

The protein resides in the cell membrane. This is an uncharacterized protein from Archaeoglobus fulgidus (strain ATCC 49558 / DSM 4304 / JCM 9628 / NBRC 100126 / VC-16).